We begin with the raw amino-acid sequence, 241 residues long: Carboxy-S-adenosyl-L-methionine synthase (241 aa).

Residues Tyr-38, 63-65, 88-89, 116-117, Asn-131, and Arg-198 each bind S-adenosyl-L-methionine; these read GCS, DN, and DI.

It belongs to the class I-like SAM-binding methyltransferase superfamily. Cx-SAM synthase family. In terms of assembly, homodimer.

The catalysed reaction is prephenate + S-adenosyl-L-methionine = carboxy-S-adenosyl-L-methionine + 3-phenylpyruvate + H2O. Catalyzes the conversion of S-adenosyl-L-methionine (SAM) to carboxy-S-adenosyl-L-methionine (Cx-SAM). The sequence is that of Carboxy-S-adenosyl-L-methionine synthase from Histophilus somni (strain 2336) (Haemophilus somnus).